A 513-amino-acid polypeptide reads, in one-letter code: 2,3-bisphosphoglycerate-independent phosphoglycerate mutase (513 aa).

Mn(2+)-binding residues include D13 and S63. The active-site Phosphoserine intermediate is the S63. Substrate is bound by residues H124, 154–155 (RD), R186, R192, 262–265 (RADR), and K335. Mn(2+) is bound by residues D402, H406, D443, H444, and H462.

The protein belongs to the BPG-independent phosphoglycerate mutase family. Monomer. Mn(2+) serves as cofactor.

It catalyses the reaction (2R)-2-phosphoglycerate = (2R)-3-phosphoglycerate. The protein operates within carbohydrate degradation; glycolysis; pyruvate from D-glyceraldehyde 3-phosphate: step 3/5. Catalyzes the interconversion of 2-phosphoglycerate and 3-phosphoglycerate. The polypeptide is 2,3-bisphosphoglycerate-independent phosphoglycerate mutase (Shewanella amazonensis (strain ATCC BAA-1098 / SB2B)).